Here is an 82-residue protein sequence, read N- to C-terminus: uncharacterized protein (82 aa).

It localises to the plastid. The protein resides in the chloroplast. This is an uncharacterized protein from Vicia faba (Broad bean).